The chain runs to 196 residues: Peptidyl-tRNA hydrolase (196 aa).

A tRNA-binding site is contributed by Tyr17. His22 functions as the Proton acceptor in the catalytic mechanism. Positions 68, 70, and 116 each coordinate tRNA.

This sequence belongs to the PTH family. In terms of assembly, monomer.

The protein resides in the cytoplasm. It catalyses the reaction an N-acyl-L-alpha-aminoacyl-tRNA + H2O = an N-acyl-L-amino acid + a tRNA + H(+). Functionally, hydrolyzes ribosome-free peptidyl-tRNAs (with 1 or more amino acids incorporated), which drop off the ribosome during protein synthesis, or as a result of ribosome stalling. In terms of biological role, catalyzes the release of premature peptidyl moieties from peptidyl-tRNA molecules trapped in stalled 50S ribosomal subunits, and thus maintains levels of free tRNAs and 50S ribosomes. The sequence is that of Peptidyl-tRNA hydrolase from Serratia proteamaculans (strain 568).